A 159-amino-acid polypeptide reads, in one-letter code: Large ribosomal subunit protein uL11 (159 aa).

This sequence belongs to the universal ribosomal protein uL11 family. As to quaternary structure, part of the ribosomal stalk of the 50S ribosomal subunit. Interacts with L10 and the large rRNA to form the base of the stalk. L10 forms an elongated spine to which L12 dimers bind in a sequential fashion forming a multimeric L10(L12)X complex.

In terms of biological role, forms part of the ribosomal stalk which helps the ribosome interact with GTP-bound translation factors. The protein is Large ribosomal subunit protein uL11 of Methanococcus maripaludis (strain C5 / ATCC BAA-1333).